We begin with the raw amino-acid sequence, 185 residues long: Superoxide dismutase [Cu-Zn] (185 aa).

An N-terminal signal peptide occupies residues 1–18 (MTAFYKLCGMSMLSLVLA). Positions 85, 87, and 102 each coordinate Cu cation. C92 and C180 are oxidised to a cystine. Residues H102, H111, H120, and D123 each contribute to the Zn(2+) site. H158 is a binding site for Cu cation.

Belongs to the Cu-Zn superoxide dismutase family. Homodimer. Cu cation is required as a cofactor. Zn(2+) serves as cofactor.

The protein localises to the periplasm. It carries out the reaction 2 superoxide + 2 H(+) = H2O2 + O2. Its function is as follows. Destroys radicals which are normally produced within the cells and which are toxic to biological systems. The sequence is that of Superoxide dismutase [Cu-Zn] (sodC) from Francisella tularensis subsp. holarctica (strain LVS).